We begin with the raw amino-acid sequence, 351 residues long: DNA polymerase IV (351 aa).

The UmuC domain maps to 3-187 (ILFVDFDYFF…IDIDEVPGVG (185 aa)). Positions 7 and 105 each coordinate Mg(2+). Glu-106 is an active-site residue.

This sequence belongs to the DNA polymerase type-Y family. Mg(2+) serves as cofactor.

It carries out the reaction DNA(n) + a 2'-deoxyribonucleoside 5'-triphosphate = DNA(n+1) + diphosphate. In terms of biological role, poorly processive, error-prone DNA polymerase involved in untargeted mutagenesis. Copies undamaged DNA at stalled replication forks, which arise in vivo from mismatched or misaligned primer ends. These misaligned primers can be extended by PolIV. Exhibits no 3'-5' exonuclease (proofreading) activity. May be involved in translesional synthesis. This chain is DNA polymerase IV, found in Sulfurisphaera tokodaii (strain DSM 16993 / JCM 10545 / NBRC 100140 / 7) (Sulfolobus tokodaii).